We begin with the raw amino-acid sequence, 98 residues long: NADH-quinone oxidoreductase subunit K (98 aa).

3 consecutive transmembrane segments (helical) span residues 1-21 (MGHL…GIFL), 27-47 (IVLL…FIAF), and 59-79 (FVFF…AILV).

Belongs to the complex I subunit 4L family. In terms of assembly, NDH-1 is composed of 14 different subunits. Subunits NuoA, H, J, K, L, M, N constitute the membrane sector of the complex.

The protein localises to the cell inner membrane. The enzyme catalyses a quinone + NADH + 5 H(+)(in) = a quinol + NAD(+) + 4 H(+)(out). NDH-1 shuttles electrons from NADH, via FMN and iron-sulfur (Fe-S) centers, to quinones in the respiratory chain. The immediate electron acceptor for the enzyme in this species is believed to be ubiquinone. Couples the redox reaction to proton translocation (for every two electrons transferred, four hydrogen ions are translocated across the cytoplasmic membrane), and thus conserves the redox energy in a proton gradient. In Xanthomonas oryzae pv. oryzae (strain PXO99A), this protein is NADH-quinone oxidoreductase subunit K.